The primary structure comprises 352 residues: Holliday junction branch migration complex subunit RuvB (352 aa).

The disordered stretch occupies residues 1–42 (MAIVSSSAGRADSQPPAAKSRVVDASPLPEEASPAREDGLRP). Residues 13–201 (SQPPAAKSRV…FGLIQRLEFY (189 aa)) are large ATPase domain (RuvB-L). A compositionally biased stretch (basic and acidic residues) spans 33–42 (SPAREDGLRP). Positions 40, 41, 82, 85, 86, 87, 191, 201, and 238 each coordinate ATP. Thr-86 lines the Mg(2+) pocket. Positions 202 to 273 (GLEDLQAIVE…LVDEALTLHR (72 aa)) are small ATPAse domain (RuvB-S). A head domain (RuvB-H) region spans residues 276–352 (ARGLDASDRR…RRHLGWPELP (77 aa)). DNA-binding residues include Arg-331 and Arg-336.

It belongs to the RuvB family. Homohexamer. Forms an RuvA(8)-RuvB(12)-Holliday junction (HJ) complex. HJ DNA is sandwiched between 2 RuvA tetramers; dsDNA enters through RuvA and exits via RuvB. An RuvB hexamer assembles on each DNA strand where it exits the tetramer. Each RuvB hexamer is contacted by two RuvA subunits (via domain III) on 2 adjacent RuvB subunits; this complex drives branch migration. In the full resolvosome a probable DNA-RuvA(4)-RuvB(12)-RuvC(2) complex forms which resolves the HJ.

It is found in the cytoplasm. It carries out the reaction ATP + H2O = ADP + phosphate + H(+). Its function is as follows. The RuvA-RuvB-RuvC complex processes Holliday junction (HJ) DNA during genetic recombination and DNA repair, while the RuvA-RuvB complex plays an important role in the rescue of blocked DNA replication forks via replication fork reversal (RFR). RuvA specifically binds to HJ cruciform DNA, conferring on it an open structure. The RuvB hexamer acts as an ATP-dependent pump, pulling dsDNA into and through the RuvAB complex. RuvB forms 2 homohexamers on either side of HJ DNA bound by 1 or 2 RuvA tetramers; 4 subunits per hexamer contact DNA at a time. Coordinated motions by a converter formed by DNA-disengaged RuvB subunits stimulates ATP hydrolysis and nucleotide exchange. Immobilization of the converter enables RuvB to convert the ATP-contained energy into a lever motion, pulling 2 nucleotides of DNA out of the RuvA tetramer per ATP hydrolyzed, thus driving DNA branch migration. The RuvB motors rotate together with the DNA substrate, which together with the progressing nucleotide cycle form the mechanistic basis for DNA recombination by continuous HJ branch migration. Branch migration allows RuvC to scan DNA until it finds its consensus sequence, where it cleaves and resolves cruciform DNA. In Prochlorococcus marinus (strain MIT 9313), this protein is Holliday junction branch migration complex subunit RuvB.